We begin with the raw amino-acid sequence, 96 residues long: Aspartyl/glutamyl-tRNA(Asn/Gln) amidotransferase subunit C (96 aa).

The protein belongs to the GatC family. In terms of assembly, heterotrimer of A, B and C subunits.

The enzyme catalyses L-glutamyl-tRNA(Gln) + L-glutamine + ATP + H2O = L-glutaminyl-tRNA(Gln) + L-glutamate + ADP + phosphate + H(+). It catalyses the reaction L-aspartyl-tRNA(Asn) + L-glutamine + ATP + H2O = L-asparaginyl-tRNA(Asn) + L-glutamate + ADP + phosphate + 2 H(+). Functionally, allows the formation of correctly charged Asn-tRNA(Asn) or Gln-tRNA(Gln) through the transamidation of misacylated Asp-tRNA(Asn) or Glu-tRNA(Gln) in organisms which lack either or both of asparaginyl-tRNA or glutaminyl-tRNA synthetases. The reaction takes place in the presence of glutamine and ATP through an activated phospho-Asp-tRNA(Asn) or phospho-Glu-tRNA(Gln). The chain is Aspartyl/glutamyl-tRNA(Asn/Gln) amidotransferase subunit C from Trichormus variabilis (strain ATCC 29413 / PCC 7937) (Anabaena variabilis).